Consider the following 108-residue polypeptide: Cell division topological specificity factor (108 aa).

It belongs to the MinE family.

Functionally, prevents the cell division inhibition by proteins MinC and MinD at internal division sites while permitting inhibition at polar sites. This ensures cell division at the proper site by restricting the formation of a division septum at the midpoint of the long axis of the cell. This Prochlorococcus marinus (strain AS9601) protein is Cell division topological specificity factor.